Reading from the N-terminus, the 539-residue chain is MTDWLDHLLILPILLPLAVAAVLIPINERDRTLKGAIGFASTLVVFILSMILMRLAAAGTGSLPGSGVYQLGNWPAPFGIVLVLDRLSALMLCLTSGLALAAQAYSMARWHTAGHHFHSLFQLLVAGLNGAFLTGDLFNLFVFFEMMLAASYGLLLHGSGPLRVKAGLHYIAVNLAASALFLIGVSLIYGAAGTLNMADLATKLAALEPRSRTLVEMGSAILGVAFLVKAGMWPLSFWLPTAYAAATPPVAGVFAVLTKVGIYVIIRLHLLVFGTAAGASSGFGQEWLVTGGMLTIAFGGIGVLASQAMGRLAGYSVLVSSGTLLAAVGLGHDGMLAGALFYLVSSTLTIGAFFLLIELVERGRDAGADVLAVTMEAYGDFDEDEEEEEVGAAIPGTMAVLGLCFCLCALLLAGLPPLSGFIAKFALISGLFDMPAAELATAMSAADWTYVTLLILSGLAAMIAMNRIGIRTFWASIEGTIPRVVVIEITPVVVLLGACIFLSLQAGPAMRYMQATADDLLAPLTHSERVLSAPRAGSQ.

A run of 14 helical transmembrane segments spans residues 4–23, 36–58, 78–100, 113–135, 140–162, 175–197, 217–239, 251–273, 283–305, 312–331, 335–357, 400–422, 442–464, and 484–506; these read WLDHLLILPILLPLAVAAVL, AIGFASTLVVFILSMILMRLAAA, FGIVLVLDRLSALMLCLTSGLAL, AGHHFHSLFQLLVAGLNGAFLTG, LFVFFEMMLAASYGLLLHGSGPL, LAASALFLIGVSLIYGAAGTLNM, MGSAILGVAFLVKAGMWPLSFWL, AGVFAVLTKVGIYVIIRLHLLVF, FGQEWLVTGGMLTIAFGGIGVLA, LAGYSVLVSSGTLLAAVGLG, MLAGALFYLVSSTLTIGAFFLLI, VLGLCFCLCALLLAGLPPLSGFI, AMSAADWTYVTLLILSGLAAMIA, and VVVIEITPVVVLLGACIFLSLQA.

Belongs to the CPA3 antiporters (TC 2.A.63) subunit D family. May form a hetero-oligomeric complex that consists of six subunits: PhaAB, PhaC, PhaD, PhaE, PhaF and PhaG.

Its subcellular location is the cell membrane. Functionally, part of a K(+) efflux system which is required for the adaptation of R.meliloti to alkaline pH as well as for the infection process during symbiotic nodule development. This chain is Probable K(+)/H(+) antiporter subunit D (phaD), found in Rhizobium meliloti (strain 1021) (Ensifer meliloti).